The chain runs to 460 residues: Probable Xaa-Pro aminopeptidase PEPP (460 aa).

Residues D256, D267, E390, and E430 each coordinate Mn(2+).

The protein belongs to the peptidase M24B family. Mn(2+) is required as a cofactor.

It catalyses the reaction Release of any N-terminal amino acid, including proline, that is linked to proline, even from a dipeptide or tripeptide.. Its function is as follows. Catalyzes the removal of a penultimate prolyl residue from the N-termini of peptides. The protein is Probable Xaa-Pro aminopeptidase PEPP (PEPP) of Podospora anserina (strain S / ATCC MYA-4624 / DSM 980 / FGSC 10383) (Pleurage anserina).